Consider the following 1388-residue polypeptide: Endoribonuclease Dicer homolog 2 (1388 aa).

Residues 31 to 210 (ALEKAIKQNT…DSYWKKIHEL (180 aa)) enclose the Helicase ATP-binding domain. 44–51 (LETGSGKT) serves as a coordination point for ATP. Positions 152-155 (DECH) match the DECH box motif. The Helicase C-terminal domain maps to 380–544 (LGYSSLENIR…PLPDDSDEPL (165 aa)). The 87-residue stretch at 559–645 (SVSLIYHYCS…VPDMVVAETV (87 aa)) folds into the Dicer dsRNA-binding fold domain. The PAZ domain occupies 805–935 (TSHEVLEKHE…LPPELCHVIL (131 aa)). RNase III domains follow at residues 962-1113 (AYNL…SEGG) and 1149-1296 (VGYM…VDSG). The Mg(2+) site is built by E1188, D1282, and E1285. A DRBM domain is found at 1315 to 1384 (TPETVKLHPV…YKEVLNLLKN (70 aa)).

It belongs to the helicase family. Dicer subfamily. It depends on Mg(2+) as a cofactor. Mn(2+) serves as cofactor.

Its subcellular location is the nucleus. It localises to the cytoplasm. In terms of biological role, ribonuclease (RNase) III involved in RNA-mediated post-transcriptional gene silencing (PTGS). Involved in the processing of natural small interfering RNAs (nat-siRNAs, derived from cis-natural antisense transcripts) by cleaving small dsRNAs into 24 nucleotide nat-siRNAs. Plays an essential role in transitive silencing of transgenes by processing secondary siRNAs. This pathway, which requires DCL4 and RDR6, amplifies silencing by using the target RNA as substrate to generate secondary siRNAs, providing an efficient mechanism for long-distance silencing. May participate with DCL3 in the production of 24 nucleotide repeat-associated siRNAs (ra-siRNAs) which derive from heterochromatin and DNA repeats such as transposons. Plays a role in antiviral RNA silencing. Involved in the production of viral siRNAs derived from the turnip crinkle virus (TCV) and tobacco rattle virus (TRV). Targeted by the viral silencing suppressor (VSR) protein 2b of the cucumber mosaic virus (CMV) that inactivates DCL2 function in RNA silencing. Does not seem to be involved in microRNAs (miRNAs) processing. In Arabidopsis thaliana (Mouse-ear cress), this protein is Endoribonuclease Dicer homolog 2.